The chain runs to 90 residues: Putative F-box protein At5g16285 (90 aa).

Positions 1–46 (MRIESLLQHDVVERILERLAVNSLPRFKAVSKQWKSTIESQFFQGK) constitute an F-box domain.

This chain is Putative F-box protein At5g16285, found in Arabidopsis thaliana (Mouse-ear cress).